We begin with the raw amino-acid sequence, 276 residues long: Proteasome subunit beta type-8 (276 aa).

A disordered region spans residues 1–33; the sequence is MALLDVCGAPRGQRPESALPVAGSGRRSDPGHY. Residues 1–72 constitute a propeptide, removed in mature form; it reads MALLDVCGAP…RNVQIEMAHG (72 aa). A Phosphothreonine modification is found at aspartate 5. Threonine 73 acts as the Nucleophile in catalysis.

This sequence belongs to the peptidase T1B family. In terms of assembly, the 26S proteasome consists of a 20S proteasome core and two 19S regulatory subunits. The 20S proteasome core is composed of 28 subunits that are arranged in four stacked rings, resulting in a barrel-shaped structure. The two end rings are each formed by seven alpha subunits, and the two central rings are each formed by seven beta subunits. The catalytic chamber with the active sites is on the inside of the barrel. Component of the immunoproteasome, where it displaces the equivalent housekeeping subunit PSMB5. Component of the spermatoproteasome, a form of the proteasome specifically found in testis. Directly interacts with POMP. Interacts with TAP1. (Microbial infection) Interacts with HIV-1 TAT protein. In terms of processing, autocleaved. The resulting N-terminal Thr residue of the mature subunit is responsible for the nucleophile proteolytic activity.

Its subcellular location is the cytoplasm. The protein localises to the nucleus. The enzyme catalyses Cleavage of peptide bonds with very broad specificity.. Its function is as follows. The proteasome is a multicatalytic proteinase complex which is characterized by its ability to cleave peptides with Arg, Phe, Tyr, Leu, and Glu adjacent to the leaving group at neutral or slightly basic pH. The proteasome has an ATP-dependent proteolytic activity. This subunit is involved in antigen processing to generate class I binding peptides. Replacement of PSMB5 by PSMB8 increases the capacity of the immunoproteasome to cleave model peptides after hydrophobic and basic residues. Involved in the generation of spliced peptides resulting from the ligation of two separate proteasomal cleavage products that are not contiguous in the parental protein. Acts as a major component of interferon gamma-induced sensitivity. Plays a key role in apoptosis via the degradation of the apoptotic inhibitor MCL1. May be involved in the inflammatory response pathway. In cancer cells, substitution of isoform 1 (E2) by isoform 2 (E1) results in immunoproteasome deficiency. Required for the differentiation of preadipocytes into adipocytes. This is Proteasome subunit beta type-8 (PSMB8) from Homo sapiens (Human).